The following is a 358-amino-acid chain: CX3C chemokine receptor 1 (358 aa).

At Met1 to Asp26 the chain is on the extracellular side. A helical membrane pass occupies residues Ile27–Leu47. Over Val48 to Asp68 the chain is Cytoplasmic. Residues Ile69–Thr89 form a helical membrane-spanning segment. Residues His90–Leu105 lie on the Extracellular side of the membrane. Cys103 and Cys176 are oxidised to a cystine. A helical membrane pass occupies residues Ile106–Val126. Over Asp127 to Gly147 the chain is Cytoplasmic. A helical membrane pass occupies residues Val148–Phe168. Over Thr169–Glu186 the chain is Extracellular. The chain crosses the membrane as a helical span at residues Ile187–Ile207. Residues Met208 to Arg232 lie on the Cytoplasmic side of the membrane. A helical transmembrane segment spans residues Leu233–Phe253. Residues Leu254 to Ala275 are Extracellular-facing. Residues Ile276–Phe296 traverse the membrane as a helical segment. At Ala297–Leu358 the chain is on the cytoplasmic side. The residue at position 349 (Thr349) is a Phosphothreonine.

Belongs to the G-protein coupled receptor 1 family. Found in a ternary complex with CX3CL1 and ITGAV:ITGB3 or ITGA4:ITGB1. Post-translationally, this protein is not N-glycosylated which is unusual for G-protein-coupled receptors.

The protein localises to the cell membrane. In terms of biological role, receptor for the C-X3-C chemokine fractalkine (CX3CL1) present on many early leukocyte cells; CX3CR1-CX3CL1 signaling exerts distinct functions in different tissue compartments, such as immune response, inflammation, cell adhesion and chemotaxis. CX3CR1-CX3CL1 signaling mediates cell migratory functions. Responsible for the recruitment of natural killer (NK) cells to inflamed tissues. Acts as a regulator of inflammation process leading to atherogenesis by mediating macrophage and monocyte recruitment to inflamed atherosclerotic plaques, promoting cell survival. Involved in airway inflammation by promoting interleukin 2-producing T helper (Th2) cell survival in inflamed lung. Involved in the migration of circulating monocytes to non-inflamed tissues, where they differentiate into macrophages and dendritic cells. Acts as a negative regulator of angiogenesis, probably by promoting macrophage chemotaxis. Plays a key role in brain microglia by regulating inflammatory response in the central nervous system (CNS) and regulating synapse maturation. Required to restrain the microglial inflammatory response in the CNS and the resulting parenchymal damage in response to pathological stimuli. Involved in brain development by participating in synaptic pruning, a natural process during which brain microglia eliminates extra synapses during postnatal development. Synaptic pruning by microglia is required to promote the maturation of circuit connectivity during brain development. Acts as an important regulator of the gut microbiota by controlling immunity to intestinal bacteria and fungi. Expressed in lamina propria dendritic cells in the small intestine, which form transepithelial dendrites capable of taking up bacteria in order to provide defense against pathogenic bacteria. Required to initiate innate and adaptive immune responses against dissemination of commensal fungi (mycobiota) component of the gut: expressed in mononuclear phagocytes (MNPs) and acts by promoting induction of antifungal IgG antibodies response to confer protection against disseminated C.albicans or C.auris infection. Also acts as a receptor for C-C motif chemokine CCL26, inducing cell chemotaxis. This is CX3C chemokine receptor 1 from Bos taurus (Bovine).